The sequence spans 475 residues: Actin-related protein 10 (475 aa).

Belongs to the actin family.

The protein localises to the cytoplasm. It is found in the cytoskeleton. The polypeptide is Actin-related protein 10 (Dictyostelium discoideum (Social amoeba)).